The following is a 367-amino-acid chain: GPN-loop GTPase 1 (367 aa).

Residues 15–22 (GMAGSGKT) and 18–23 (GSGKTT) contribute to the GTP site. Residues 75 to 77 (GPN) carry the Gly-Pro-Asn (GPN)-loop; involved in dimer interface motif. 178–181 (NKCD) lines the GTP pocket. A coiled-coil region spans residues 247 to 290 (EGMDDFLEAVKAKVKEYEEEYVPEMERMKEIQRQTKERQKEAQL). Residues 306–332 (VGLTVSDAEDEYNGELVDPDEDDGLTA) form a disordered region. At S311 the chain carries Phosphoserine. Acidic residues predominate over residues 312-332 (DAEDEYNGELVDPDEDDGLTA).

This sequence belongs to the GPN-loop GTPase family. Heterodimers with gpn2 or fet5/gpn3. Binds to RNA polymerase II (RNAPII).

It localises to the cytoplasm. In terms of biological role, small GTPase required for proper nuclear import of RNA polymerase II (RNAPII). May act at an RNAP assembly step prior to nuclear import. This chain is GPN-loop GTPase 1, found in Schizosaccharomyces pombe (strain 972 / ATCC 24843) (Fission yeast).